The primary structure comprises 552 residues: MIKTWIRCLTTEVRYHQPNAHGRSLVMSVLNSTVTKREAKDYLNKYTDENNHHYCLVFLRHLSEYSDNVLSGFSKTVSRIQTLGLRPILIVDPLCQDISYQSQRLDNHLHDQSLKSIIVLDPITIGERGSIDVKLPILNPHIIPIIEPYQYHEKEAFKKLAGDPSRFLSSLVSNLPINIDKVFLISKYGGLPSVERHTNSHVFVNLSQEYRELRNSYQNQLEKLESIQVDNTEKNLVESLQLFLNQDKILSNSDQLKCHMEDLEIMNKTLSVLPHSSTGLITTILAGSKLSDNNPLVYNILTDRSLISSSLPRFKRSAAAQSKSWYELPSSNVEEEVTSANDSVLVTTVFKKGIDIHIFDFRTLTDDNSIGLPPSQATQTGKSDPVSKKLDLNKLNGIINSSFKRSLDLSHYLGRINGNIASIIVIGDYEGIAILTYEGPKDKQFVYLDKFAVAQKLKGSLGISDIIFNLMFRKFPHELIWRSREDNVVNKWYFQRSTGVLHLSLDLGNDDQKQSIFKLFYYGNPESESFHNVERLRDYAKYVRDITPSWHK.

A mitochondrion-targeting transit peptide spans Met1–Ser32. The N-acetyltransferase domain occupies Gln379–Asp545.

The protein belongs to the acetyltransferase family.

The protein resides in the mitochondrion. It carries out the reaction L-glutamate + acetyl-CoA = N-acetyl-L-glutamate + CoA + H(+). Its pathway is amino-acid biosynthesis; L-arginine biosynthesis; N(2)-acetyl-L-ornithine from L-glutamate: step 1/4. Functionally, N-acetylglutamate synthase involved in arginine biosynthesis. The sequence is that of Amino-acid acetyltransferase, mitochondrial (ARG2) from Kluyveromyces lactis (strain ATCC 8585 / CBS 2359 / DSM 70799 / NBRC 1267 / NRRL Y-1140 / WM37) (Yeast).